A 336-amino-acid chain; its full sequence is Serpentine receptor class gamma-9 (336 aa).

7 consecutive transmembrane segments (helical) span residues 30-50, 64-84, 111-131, 152-172, 200-220, 237-257, and 271-291; these read LLQAAYMVPPAFLYARILYVI, FVIYSMDSIVGFILLLLDIFI, IYYPLLNYLHCAQPLIQIFLT, LSFIVAFVSLSPFLIIWNTII, FLFLVRSVAVIITVASTVIMF, LCLACVIHSICFMVPSFFEAL, and FLIQPFAWDVLNVGSPLIMIF.

The protein belongs to the nematode receptor-like protein srg family.

It localises to the membrane. This Caenorhabditis elegans protein is Serpentine receptor class gamma-9 (srg-9).